Here is a 353-residue protein sequence, read N- to C-terminus: Deoxyhypusine synthase (353 aa).

Residues 90–94 (SNLIS), 116–118 (TAG), glutamate 122, and aspartate 228 each bind NAD(+). 121-122 (EE) contributes to the spermidine binding site. Aspartate 233 lines the spermidine pocket. Glycine 275 is a binding site for NAD(+). A spermidine-binding site is contributed by histidine 280. 300–301 (TA) provides a ligand contact to NAD(+). Spermidine contacts are provided by residues 306–308 (GSD) and 315–321 (EAVSWGK). Lysine 321 (nucleophile) is an active-site residue. Residue 334 to 335 (EA) coordinates NAD(+).

It belongs to the deoxyhypusine synthase family. Homotetramer. Requires NAD(+) as cofactor.

The enzyme catalyses [eIF5A protein]-L-lysine + spermidine = [eIF5A protein]-deoxyhypusine + propane-1,3-diamine. It functions in the pathway protein modification; eIF5A hypusination. In terms of biological role, catalyzes the NAD-dependent oxidative cleavage of spermidine and the subsequent transfer of the butylamine moiety of spermidine to the epsilon-amino group of a specific lysine residue of the eIF-5A precursor protein to form the intermediate deoxyhypusine residue. The chain is Deoxyhypusine synthase (dys-1) from Neurospora crassa (strain ATCC 24698 / 74-OR23-1A / CBS 708.71 / DSM 1257 / FGSC 987).